The primary structure comprises 247 residues: Flavin-dependent thymidylate synthase (247 aa).

A ThyX domain is found at 1–237 (MDVKLLEATD…PKTFEYYEQE (237 aa)). Residues 85–88 (QITR), 98–100 (SMR), and arginine 176 each bind dUMP. An FAD-binding site is contributed by 88-90 (RHR). The short motif at 88 to 98 (RHRHVSFDVQS) is the ThyX motif element. FAD-binding positions include 192–194 (NAR) and histidine 198. Arginine 203 contributes to the dUMP binding site. Arginine 203 (involved in ionization of N3 of dUMP, leading to its activation) is an active-site residue.

Belongs to the thymidylate synthase ThyX family. In terms of assembly, homotetramer. FAD is required as a cofactor.

It catalyses the reaction dUMP + (6R)-5,10-methylene-5,6,7,8-tetrahydrofolate + NADPH + H(+) = dTMP + (6S)-5,6,7,8-tetrahydrofolate + NADP(+). It functions in the pathway pyrimidine metabolism; dTTP biosynthesis. Catalyzes the reductive methylation of 2'-deoxyuridine-5'-monophosphate (dUMP) to 2'-deoxythymidine-5'-monophosphate (dTMP) while utilizing 5,10-methylenetetrahydrofolate (mTHF) as the methyl donor, and NADPH and FADH(2) as the reductant. The protein is Flavin-dependent thymidylate synthase of Haloarcula marismortui (strain ATCC 43049 / DSM 3752 / JCM 8966 / VKM B-1809) (Halobacterium marismortui).